We begin with the raw amino-acid sequence, 210 residues long: Redox-sensing transcriptional repressor Rex (210 aa).

The segment at residues 16 to 55 (IYMRTLQELLEDDVDVISSERLAKQCGVNPAQIRKDLAYF) is a DNA-binding region (H-T-H motif). Residue 90–95 (GLGNLG) coordinates NAD(+).

This sequence belongs to the transcriptional regulatory Rex family. As to quaternary structure, homodimer.

The protein resides in the cytoplasm. Modulates transcription in response to changes in cellular NADH/NAD(+) redox state. This Syntrophobacter fumaroxidans (strain DSM 10017 / MPOB) protein is Redox-sensing transcriptional repressor Rex.